We begin with the raw amino-acid sequence, 99 residues long: UPF0751 protein BCAH820_B0138 (99 aa).

The protein belongs to the UPF0751 family.

The sequence is that of UPF0751 protein BCAH820_B0138 from Bacillus cereus (strain AH820).